The chain runs to 43 residues: Potassium channel toxin gamma-KTx 4.3 (43 aa).

Cystine bridges form between cysteine 5–cysteine 23, cysteine 11–cysteine 34, cysteine 20–cysteine 39, and cysteine 24–cysteine 41.

Belongs to the ergtoxin family. Gamma-KTx 4 subfamily. As to expression, expressed by the venom gland.

Its subcellular location is the secreted. Its function is as follows. Reversibly blocks Kv11/ERG potassium channels. This chain is Potassium channel toxin gamma-KTx 4.3, found in Centruroides exilicauda (Bark scorpion).